Consider the following 188-residue polypeptide: Ribosome-recycling factor (188 aa).

The protein belongs to the RRF family.

It localises to the cytoplasm. Responsible for the release of ribosomes from messenger RNA at the termination of protein biosynthesis. May increase the efficiency of translation by recycling ribosomes from one round of translation to another. This chain is Ribosome-recycling factor, found in Granulibacter bethesdensis (strain ATCC BAA-1260 / CGDNIH1).